Consider the following 637-residue polypeptide: Chaperone protein HtpG (637 aa).

Residues 1–338 (MTSTIDKNGA…SADLPLNISR (338 aa)) form an a; substrate-binding region. The interval 339-552 (EMIQESPILA…ESGPDRQLEK (214 aa)) is b. Residues 553–637 (ILLGVGQLAG…LRRSSAGGGD (85 aa)) form a c region.

This sequence belongs to the heat shock protein 90 family. As to quaternary structure, homodimer.

It is found in the cytoplasm. Molecular chaperone. Has ATPase activity. This chain is Chaperone protein HtpG, found in Nitrobacter winogradskyi (strain ATCC 25391 / DSM 10237 / CIP 104748 / NCIMB 11846 / Nb-255).